Here is a 216-residue protein sequence, read N- to C-terminus: Elongation factor Ts (216 aa).

Positions 81-84 (TDFV) are involved in Mg(2+) ion dislocation from EF-Tu.

This sequence belongs to the EF-Ts family.

The protein localises to the cytoplasm. Associates with the EF-Tu.GDP complex and induces the exchange of GDP to GTP. It remains bound to the aminoacyl-tRNA.EF-Tu.GTP complex up to the GTP hydrolysis stage on the ribosome. This chain is Elongation factor Ts, found in Geotalea uraniireducens (strain Rf4) (Geobacter uraniireducens).